Reading from the N-terminus, the 289-residue chain is Bidirectional sugar transporter SWEET15 (289 aa).

Residues 1 to 10 (MAMAMANHHT) lie on the Extracellular side of the membrane. The chain crosses the membrane as a helical span at residues 11-31 (LGLIFGILGNIISFLVYFAPA). The region spanning 14–100 (IFGILGNIIS…LYFFYAPMQA (87 aa)) is the MtN3/slv 1 domain. Topologically, residues 32–45 (PTFYRIYKRKSAEG) are cytoplasmic. The chain crosses the membrane as a helical span at residues 46–66 (FHSLPYIVALFSAMLWLYYAL). Residues 67-70 (LKKD) are Extracellular-facing. Residues 71-91 (AFLLITINSFGCAIESFYILL) traverse the membrane as a helical segment. Topologically, residues 92-106 (YFFYAPMQAKKQTLK) are cytoplasmic. Residues 107–127 (VVISLNVGVFSILVVLIQFLL) traverse the membrane as a helical segment. Residues 128–134 (KGSNRIN) lie on the Extracellular side of the membrane. The helical transmembrane segment at 135–155 (VFGWICASFSVAVFAAPLSIV) threads the bilayer. The 84-residue stretch at 136–219 (FGWICASFSV…VLYGFYRNAG (84 aa)) folds into the MtN3/slv 2 domain. Residues 156-167 (AKVIRTKSVEFM) are Cytoplasmic-facing. Residues 168–188 (PFSLSFFLTLSAIMWFAYGLL) traverse the membrane as a helical segment. Over 189 to 193 (KNDPC) the chain is Extracellular. The helical transmembrane segment at 194–214 (VAIPNILGVILGLVQMVLYGF) threads the bilayer. Over 215-289 (YRNAGKEKME…GELQPNGSTV (75 aa)) the chain is Cytoplasmic. The tract at residues 249 to 289 (GAQQNGIKKSGSEDVKDDEETGNREKSTENSGELQPNGSTV) is disordered. A compositionally biased stretch (polar residues) spans 277–289 (ENSGELQPNGSTV).

This sequence belongs to the SWEET sugar transporter family. In terms of assembly, forms homooligomers and/or heterooligomers.

The protein resides in the cell membrane. Functionally, mediates both low-affinity uptake and efflux of sugar across the plasma membrane. The protein is Bidirectional sugar transporter SWEET15 of Vitis vinifera (Grape).